The following is a 227-amino-acid chain: PKHD-type hydroxylase GOX0559 (227 aa).

The Fe2OG dioxygenase domain maps to 78–178 (RVYPPLFNRY…RWASFFWSQS (101 aa)). Residues His96, Asp98, and His159 each coordinate Fe cation. Residue Arg169 coordinates 2-oxoglutarate.

It depends on Fe(2+) as a cofactor. Requires L-ascorbate as cofactor.

The protein is PKHD-type hydroxylase GOX0559 of Gluconobacter oxydans (strain 621H) (Gluconobacter suboxydans).